The sequence spans 210 residues: Leucyl/phenylalanyl-tRNA--protein transferase (210 aa).

This sequence belongs to the L/F-transferase family.

The protein localises to the cytoplasm. The enzyme catalyses N-terminal L-lysyl-[protein] + L-leucyl-tRNA(Leu) = N-terminal L-leucyl-L-lysyl-[protein] + tRNA(Leu) + H(+). It carries out the reaction N-terminal L-arginyl-[protein] + L-leucyl-tRNA(Leu) = N-terminal L-leucyl-L-arginyl-[protein] + tRNA(Leu) + H(+). The catalysed reaction is L-phenylalanyl-tRNA(Phe) + an N-terminal L-alpha-aminoacyl-[protein] = an N-terminal L-phenylalanyl-L-alpha-aminoacyl-[protein] + tRNA(Phe). Functionally, functions in the N-end rule pathway of protein degradation where it conjugates Leu, Phe and, less efficiently, Met from aminoacyl-tRNAs to the N-termini of proteins containing an N-terminal arginine or lysine. This chain is Leucyl/phenylalanyl-tRNA--protein transferase, found in Deinococcus radiodurans (strain ATCC 13939 / DSM 20539 / JCM 16871 / CCUG 27074 / LMG 4051 / NBRC 15346 / NCIMB 9279 / VKM B-1422 / R1).